The sequence spans 478 residues: ATP synthase subunit beta (478 aa).

Position 161–168 (161–168 (GGAGVGKT)) interacts with ATP.

Belongs to the ATPase alpha/beta chains family. F-type ATPases have 2 components, CF(1) - the catalytic core - and CF(0) - the membrane proton channel. CF(1) has five subunits: alpha(3), beta(3), gamma(1), delta(1), epsilon(1). CF(0) has four main subunits: a(1), b(1), b'(1) and c(9-12).

Its subcellular location is the cell inner membrane. The catalysed reaction is ATP + H2O + 4 H(+)(in) = ADP + phosphate + 5 H(+)(out). Its function is as follows. Produces ATP from ADP in the presence of a proton gradient across the membrane. The catalytic sites are hosted primarily by the beta subunits. This chain is ATP synthase subunit beta, found in Gloeobacter violaceus (strain ATCC 29082 / PCC 7421).